We begin with the raw amino-acid sequence, 31 residues long: Cytochrome b6-f complex subunit 6 (31 aa).

The helical transmembrane segment at 4 to 24 threads the bilayer; the sequence is ITSYFGFLLAALTITSALLIG.

This sequence belongs to the PetL family. The 4 large subunits of the cytochrome b6-f complex are cytochrome b6, subunit IV (17 kDa polypeptide, PetD), cytochrome f and the Rieske protein, while the 4 small subunits are PetG, PetL, PetM and PetN. The complex functions as a dimer.

The protein resides in the plastid. It localises to the chloroplast thylakoid membrane. Component of the cytochrome b6-f complex, which mediates electron transfer between photosystem II (PSII) and photosystem I (PSI), cyclic electron flow around PSI, and state transitions. PetL is important for photoautotrophic growth as well as for electron transfer efficiency and stability of the cytochrome b6-f complex. The sequence is that of Cytochrome b6-f complex subunit 6 from Magnolia grandiflora (Southern magnolia).